The primary structure comprises 525 residues: Acyl-lipid (9-3)-desaturase (525 aa).

The region spanning 102 to 176 is the Cytochrome b5 heme-binding domain; the sequence is KSTHPLSEVA…LQDFYIGDVE (75 aa). Heme contacts are provided by His-137 and His-159. Residues 216–236 traverse the membrane as a helical segment; that stretch reads VAIFAASIAIICWSKTISAVL. Residues 254-258 carry the Histidine box-1 motif; that stretch reads HDFLH. Residues 266-286 form a helical membrane-spanning segment; the sequence is WLNEVVGYVIGNAVLGFSTGW. A Histidine box-2 motif is present at residues 291-295; it reads HNLHH. 3 helical membrane passes run 340-360, 378-398, and 401-421; these read QHLF…FWSW, GTVL…LPGW, and LVWM…VFVL. The short motif at 462–466 is the Histidine box-3 element; it reads QIEHH.

Belongs to the fatty acid desaturase type 1 family.

The protein resides in the membrane. It carries out the reaction (9Z,12Z,15Z)-octadecatrienoyl-containing glycerolipid + 2 Fe(II)-[cytochrome b5] + O2 + 2 H(+) = (6Z,9Z,12Z,15Z)-octadecatetraenoyl-containing glycerolipid + 2 Fe(III)-[cytochrome b5] + 2 H2O. The catalysed reaction is a (9Z,12Z)-octadecadienoyl-containing glycerolipid + 2 Fe(II)-[cytochrome b5] + O2 + 2 H(+) = (6Z,9Z,12Z)-octadecatrienoyl-containing glycerolipid + 2 Fe(III)-[cytochrome b5] + 2 H2O. Its pathway is lipid metabolism; polyunsaturated fatty acid biosynthesis. In terms of biological role, fatty acid desaturase able to introduce a delta(6)-double bond into delta(9)-unsaturated fatty-acid substrates. Can use both linoleic acid (18:2(9Z,12Z)) and alpha-linolenic acid (18:3(9Z,12Z,15Z)) as substrates. Required for the biosynthesis of arachidonic acid (20:4(5z,8Z,11Z,14Z)). The sequence is that of Acyl-lipid (9-3)-desaturase from Physcomitrium patens (Spreading-leaved earth moss).